Consider the following 158-residue polypeptide: Protein-export protein SecB (158 aa).

This sequence belongs to the SecB family. As to quaternary structure, homotetramer, a dimer of dimers. One homotetramer interacts with 1 SecA dimer.

Its subcellular location is the cytoplasm. In terms of biological role, one of the proteins required for the normal export of preproteins out of the cell cytoplasm. It is a molecular chaperone that binds to a subset of precursor proteins, maintaining them in a translocation-competent state. It also specifically binds to its receptor SecA. The protein is Protein-export protein SecB of Bartonella quintana (strain Toulouse) (Rochalimaea quintana).